We begin with the raw amino-acid sequence, 172 residues long: Small t antigen (172 aa).

Met-1 is modified (N-acetylmethionine; by host). Residues 12–75 (ELMDLLGLER…VKVAHQPDFG (64 aa)) form the J domain. The C4-type; atypical zinc finger occupies 101-114 (CATKPSAHCPCMLC). Residues 120 to 141 (HVYRKFLRRDPLVWIDCYCFDC) form an H1C3-type; atypical zinc finger.

As to quaternary structure, interacts with host PPP2R1A; the interaction inhibits PP2A activity.

The protein resides in the host cytoplasm. It is found in the host nucleus. Functionally, promotes efficient viral genome replication by accelerating both G1 and S phase progression of the cell cycle. Inhibits host PP2A by binding to the A subunit, thereby displacing lower affinity regulatory B subunit. Inactivation of PP2A in turn results in the transactivation of cyclin A and cyclin D1 promoters. Late during the infection cycle, ST may induce dephosphorylation of host MTOR, leading to the inhibition of cap-dependent translation. May establish and maintain high levels of viral genomes during persistent infection in cell culture. This Simian virus 12 (strain wt100) (SV-12) protein is Small t antigen.